We begin with the raw amino-acid sequence, 220 residues long: Iron-sulfur cluster repair protein YtfE (220 aa).

Belongs to the RIC family. YtfE subfamily. In terms of assembly, homodimer.

The protein localises to the cytoplasm. Di-iron-containing protein involved in the repair of iron-sulfur clusters damaged by oxidative and nitrosative stress conditions. The polypeptide is Iron-sulfur cluster repair protein YtfE (Salmonella choleraesuis (strain SC-B67)).